A 391-amino-acid polypeptide reads, in one-letter code: Acetate kinase (391 aa).

Residue asparagine 7 coordinates Mg(2+). Lysine 14 is a binding site for ATP. Arginine 88 contacts substrate. Aspartate 145 serves as the catalytic Proton donor/acceptor. ATP-binding positions include 203–207, 278–280, and 326–330; these read HAGNG, DAR, and GMGEN. Glutamate 378 is a Mg(2+) binding site.

Belongs to the acetokinase family. As to quaternary structure, homodimer. Requires Mg(2+) as cofactor. Mn(2+) serves as cofactor.

The protein resides in the cytoplasm. The enzyme catalyses acetate + ATP = acetyl phosphate + ADP. It functions in the pathway metabolic intermediate biosynthesis; acetyl-CoA biosynthesis; acetyl-CoA from acetate: step 1/2. Catalyzes the formation of acetyl phosphate from acetate and ATP. Can also catalyze the reverse reaction. The polypeptide is Acetate kinase (Phytoplasma mali (strain AT)).